The sequence spans 480 residues: MSPQTETKASVGFKAGVKDYKLTYYTPEYQPLDTDILAAFRVTPQPGVPSEEAGAAVAAESSTGTWTTVWTDGLTSLDRYKGRCYHIDAVPGEDNQYICYVAYPLDLFEEGSVTNMFTSIVGNVFGFKALRALRLEDLRIPVAYIKTFQGPPHGIQVERDKLNKYGRPLLGCTIKPKLGLSAKNYGRAVYECLRGGLDFTKDDENVNSQPFMRWRDRFLFCAEAIYKAQAETGEIKGHYLNATAGTCEEMIKRAVFARELGVPIVMHDYLTGGFTANTSLAHYCRDNGLLLHIHRAMHAVIDRQKNHGMHFRVLAKALRLSGGDHIHAGTVVGKLEGERDITLGFVDLLRDDYTEIDPERGIYFTQFWVSTPGVLPVASGGIHVWHMPALTEIFGDDSVLQFGGGTLGHPWGNAPGAVANRVALEACVQARNEGRDLAREGATIIREASKWSPELAAACEVWKEIKFEFPAVDTLDKKKG.

The propeptide occupies 1 to 2 (MS). Position 3 is an N-acetylproline (Pro3). Lys14 carries the N6,N6,N6-trimethyllysine modification. Substrate contacts are provided by Asn123 and Thr173. Catalysis depends on Lys175, which acts as the Proton acceptor. Position 177 (Lys177) interacts with substrate. 3 residues coordinate Mg(2+): Lys201, Asp203, and Glu204. Lys201 is modified (N6-carboxylysine). The active-site Proton acceptor is the His294. Arg295, His327, and Ser379 together coordinate substrate.

This sequence belongs to the RuBisCO large chain family. Type I subfamily. In terms of assembly, heterohexadecamer of 8 large chains and 8 small chains; disulfide-linked. The disulfide link is formed within the large subunit homodimers. Mg(2+) serves as cofactor. In terms of processing, the disulfide bond which can form in the large chain dimeric partners within the hexadecamer appears to be associated with oxidative stress and protein turnover.

It localises to the plastid. The protein resides in the chloroplast. It catalyses the reaction 2 (2R)-3-phosphoglycerate + 2 H(+) = D-ribulose 1,5-bisphosphate + CO2 + H2O. The catalysed reaction is D-ribulose 1,5-bisphosphate + O2 = 2-phosphoglycolate + (2R)-3-phosphoglycerate + 2 H(+). Functionally, ruBisCO catalyzes two reactions: the carboxylation of D-ribulose 1,5-bisphosphate, the primary event in carbon dioxide fixation, as well as the oxidative fragmentation of the pentose substrate in the photorespiration process. Both reactions occur simultaneously and in competition at the same active site. The chain is Ribulose bisphosphate carboxylase large chain from Alluaudia procera (Madagascan ocotillo).